A 640-amino-acid chain; its full sequence is 1-deoxy-D-xylulose-5-phosphate synthase (640 aa).

Thiamine diphosphate-binding positions include H79 and 120 to 122 (AHS). Position 151 (D151) interacts with Mg(2+). Thiamine diphosphate is bound by residues 152–153 (GA), N180, Y289, and E371. Residue N180 participates in Mg(2+) binding.

It belongs to the transketolase family. DXPS subfamily. In terms of assembly, homodimer. It depends on Mg(2+) as a cofactor. Requires thiamine diphosphate as cofactor.

The catalysed reaction is D-glyceraldehyde 3-phosphate + pyruvate + H(+) = 1-deoxy-D-xylulose 5-phosphate + CO2. Its pathway is metabolic intermediate biosynthesis; 1-deoxy-D-xylulose 5-phosphate biosynthesis; 1-deoxy-D-xylulose 5-phosphate from D-glyceraldehyde 3-phosphate and pyruvate: step 1/1. In terms of biological role, catalyzes the acyloin condensation reaction between C atoms 2 and 3 of pyruvate and glyceraldehyde 3-phosphate to yield 1-deoxy-D-xylulose-5-phosphate (DXP). The chain is 1-deoxy-D-xylulose-5-phosphate synthase from Erythrobacter litoralis (strain HTCC2594).